A 588-amino-acid polypeptide reads, in one-letter code: Intracellular maltogenic amylase (588 aa).

Ca(2+) is bound by residues N149, S155, G174, and D176. Substrate is bound by residues H249 and R325. D327 acts as the Nucleophile in catalysis. The Proton donor role is filled by E356. Substrate contacts are provided by residues 422–423 (HD), D467, and R471.

It belongs to the glycosyl hydrolase 13 family. BbmA subfamily. As to quaternary structure, monomer or homodimer; in equilibrium. It depends on Ca(2+) as a cofactor.

It is found in the cytoplasm. Functionally, hydrolyzes beta-cyclodextrin to maltose and glucose, soluble starch to maltose and glucose, and pullulan to panose with trace amounts of maltose and glucose. It is also able to hydrolyze acarbose. Can also exhibit a transglycosylation activity transferring glucose or maltose to another moiety of sugars by forming alpha-(1,6)- and alpha-(1,3)-glycosidic linkages upon the hydrolysis of substrate at concentrations of 5% or higher. This chain is Intracellular maltogenic amylase (bbmA), found in Bacillus subtilis (strain 168).